The chain runs to 116 residues: Sperm mitochondrial-associated cysteine-rich protein (116 aa).

7 repeat units span residues 6–13 (KHSKCCPA), 14–21 (KGNQCCPP), 30–37 (KGNQCCPP), 38–45 (KQNQCCQP), 46–53 (KGSQCCPP), 54–61 (KHNHCCQP), and 62–68 (KPPCCIQ). A 7 X 7 (OR 8) AA approximate repeats region spans residues 6–68 (KHSKCCPAKG…CQPKPPCCIQ (63 aa)). The interval 80–116 (VSPLNMESEPNSPQTQDKGCQTQQQPHSPQNESRPSK) is disordered. Residues 93-104 (QTQDKGCQTQQQ) show a composition bias toward low complexity. The span at 105 to 116 (PHSPQNESRPSK) shows a compositional bias: polar residues.

In terms of tissue distribution, testis. Is selectively expressed in the spermatids of seminiferous tubules.

The protein resides in the cytoplasm. Its subcellular location is the mitochondrion membrane. Its function is as follows. Involved in sperm motility. Its absence is associated with genetic background dependent male infertility. Infertility may be due to reduced sperm motility in the female reproductive tract and inability to penetrate the oocyte zona pellucida. The sequence is that of Sperm mitochondrial-associated cysteine-rich protein (SMCP) from Homo sapiens (Human).